The chain runs to 480 residues: Glycogen synthase (480 aa).

Lysine 15 serves as a coordination point for ADP-alpha-D-glucose.

Belongs to the glycosyltransferase 1 family. Bacterial/plant glycogen synthase subfamily.

The enzyme catalyses [(1-&gt;4)-alpha-D-glucosyl](n) + ADP-alpha-D-glucose = [(1-&gt;4)-alpha-D-glucosyl](n+1) + ADP + H(+). It functions in the pathway glycan biosynthesis; glycogen biosynthesis. Synthesizes alpha-1,4-glucan chains using ADP-glucose. This chain is Glycogen synthase, found in Rhizobium tropici.